The primary structure comprises 443 residues: UDP-N-acetylmuramate--L-alanine ligase (443 aa).

110 to 116 (GAHGKTS) provides a ligand contact to ATP.

The protein belongs to the MurCDEF family.

It localises to the cytoplasm. It catalyses the reaction UDP-N-acetyl-alpha-D-muramate + L-alanine + ATP = UDP-N-acetyl-alpha-D-muramoyl-L-alanine + ADP + phosphate + H(+). It functions in the pathway cell wall biogenesis; peptidoglycan biosynthesis. Functionally, cell wall formation. The chain is UDP-N-acetylmuramate--L-alanine ligase from Streptococcus gordonii (strain Challis / ATCC 35105 / BCRC 15272 / CH1 / DL1 / V288).